The sequence spans 519 residues: Ribonuclease Y (519 aa).

Residues 3-23 form a helical membrane-spanning segment; the sequence is LIEIVLLLVGMAVGAATGFIL. One can recognise a KH domain in the interval 209 to 272; sequence TVTAVSLPSE…QIAKMALERL (64 aa). The region spanning 335–428 is the HD domain; sequence VLQHSMEVAS…VQAADSLSGA (94 aa).

Belongs to the RNase Y family.

The protein resides in the cell membrane. Its function is as follows. Endoribonuclease that initiates mRNA decay. The protein is Ribonuclease Y of Oleidesulfovibrio alaskensis (strain ATCC BAA-1058 / DSM 17464 / G20) (Desulfovibrio alaskensis).